Consider the following 65-residue polypeptide: Large ribosomal subunit protein bL35 (65 aa).

This sequence belongs to the bacterial ribosomal protein bL35 family.

In Agathobacter rectalis (strain ATCC 33656 / DSM 3377 / JCM 17463 / KCTC 5835 / VPI 0990) (Eubacterium rectale), this protein is Large ribosomal subunit protein bL35.